A 382-amino-acid polypeptide reads, in one-letter code: Anhydro-N-acetylmuramic acid kinase (382 aa).

An ATP-binding site is contributed by 9 to 16 (GTSLDGID).

This sequence belongs to the anhydro-N-acetylmuramic acid kinase family.

It carries out the reaction 1,6-anhydro-N-acetyl-beta-muramate + ATP + H2O = N-acetyl-D-muramate 6-phosphate + ADP + H(+). The protein operates within amino-sugar metabolism; 1,6-anhydro-N-acetylmuramate degradation. It participates in cell wall biogenesis; peptidoglycan recycling. Its function is as follows. Catalyzes the specific phosphorylation of 1,6-anhydro-N-acetylmuramic acid (anhMurNAc) with the simultaneous cleavage of the 1,6-anhydro ring, generating MurNAc-6-P. Is required for the utilization of anhMurNAc either imported from the medium or derived from its own cell wall murein, and thus plays a role in cell wall recycling. This is Anhydro-N-acetylmuramic acid kinase from Bacillus cereus (strain 03BB102).